Reading from the N-terminus, the 441-residue chain is Malate dehydrogenase [NADP], chloroplastic (441 aa).

Residues 1–58 constitute a chloroplast transit peptide; it reads MALTQLNSTCSKPQLHSSSQLSFLSRTRTRTLPRHYHSTFAPLHRTQHARISCSVAPN. A disulfide bridge connects residues Cys76 and Cys81. NADP(+) is bound at residue 105 to 111; it reads GAAGMIS. Residues Arg186 and Arg192 each coordinate substrate. Asn199 serves as a coordination point for NADP(+). NAD(+) is bound at residue Gln206. An NADP(+)-binding site is contributed by 223 to 225; it reads VGN. Substrate-binding residues include Asn225 and Arg256. His281 acts as the Proton acceptor in catalysis. Cys417 and Cys429 are joined by a disulfide.

The protein belongs to the LDH/MDH superfamily. MDH type 2 family. Homodimer.

The protein localises to the plastid. Its subcellular location is the chloroplast. It catalyses the reaction (S)-malate + NADP(+) = oxaloacetate + NADPH + H(+). Chloroplast NADP-MDH is activated upon illumination. In order to be enzymatically active, disulfide bridges on the protein must be reduced by thioredoxin which receives electrons from ferredoxin and the electron transport system of photosynthesis. Its function is as follows. The chloroplastic, NADP-dependent form is essential for the photosynthesis C4 cycle, which allows plants to circumvent the problem of photorespiration. In C4 plants, NADP-MDH activity acts to convert oxaloacetate to malate in chloroplasts of mesophyll cells for transport to the bundle sheath cells. The protein is Malate dehydrogenase [NADP], chloroplastic of Pisum sativum (Garden pea).